The chain runs to 328 residues: Malate dehydrogenase (328 aa).

NAD(+) is bound at residue 12–18 (GAAGQIG). Residues R95 and R101 each coordinate substrate. NAD(+)-binding positions include N108, Q115, and 132–134 (VGN). Residues N134 and R165 each contribute to the substrate site. Residue H190 is the Proton acceptor of the active site.

It belongs to the LDH/MDH superfamily. MDH type 2 family.

It carries out the reaction (S)-malate + NAD(+) = oxaloacetate + NADH + H(+). In terms of biological role, catalyzes the reversible oxidation of malate to oxaloacetate. The protein is Malate dehydrogenase of Methylibium petroleiphilum (strain ATCC BAA-1232 / LMG 22953 / PM1).